The chain runs to 384 residues: Spermatogenesis-associated protein 32 (384 aa).

A disordered region spans residues 23–60 (RDDLSQHQIQEEQELEADMLEQKPQLQVDLDLDPDPDP). Phosphoserine is present on residues S167 and S170. 3 disordered regions span residues 211 to 232 (DAHSAPPTTSSQAPSPLLSSDL), 284 to 310 (VEEREPENHAETLPEKPREARAPLKSW), and 340 to 366 (LLQPPATSPLLQGSKEDSVPPGKEKEN). The span at 214–231 (SAPPTTSSQAPSPLLSSD) shows a compositional bias: low complexity. Positions 353-366 (SKEDSVPPGKEKEN) are enriched in basic and acidic residues.

Interacts with syntaxin-1 and ACTB. In terms of tissue distribution, detected in testis, and on the acrosomal cap of spermatids.

The protein is Spermatogenesis-associated protein 32 (SPATA32) of Homo sapiens (Human).